Here is a 380-residue protein sequence, read N- to C-terminus: MTLVEELLGAKTGEVVVREVDLVYAHDGTMPLIIEAFRRNFTRVVPRTYVFFDHVFPAPTVKIANLQKEILEFAGEQGIPVIQGQGISHQLAVEMGLADNARIVVGADSHTPTLGALGVFAVGIGATDTAVVMGLGKTWFRVPESVSVVFEGRPGKNVMAADAMIHIITALRDFEMNYKAIEFFNVPFSFDERLTLTNFSVEANAKTGIIGEEYSGDGYVLELGIDLSSLPPMVAKPHHPSNGVPVEEVEGTKIDQVFIGSCTNGRFEQIERAAEILAGEEVAVRTIIGPASANVYRRMIETGIAKVLIDAGAVILPPGCGPCLGRHMGVAGDGDVILSTTNRNFRGRMGSPNSEIYLASPVTAALSALYGEITTPEGGA.

Residues cysteine 262, cysteine 320, and cysteine 323 each coordinate [4Fe-4S] cluster.

The protein belongs to the aconitase/IPM isomerase family. LeuC type 2 subfamily. As to quaternary structure, heterodimer of LeuC and LeuD. The cofactor is [4Fe-4S] cluster.

It carries out the reaction (2R,3S)-3-isopropylmalate = (2S)-2-isopropylmalate. Its pathway is amino-acid biosynthesis; L-leucine biosynthesis; L-leucine from 3-methyl-2-oxobutanoate: step 2/4. Catalyzes the isomerization between 2-isopropylmalate and 3-isopropylmalate, via the formation of 2-isopropylmaleate. The polypeptide is 3-isopropylmalate dehydratase large subunit (Thermococcus kodakarensis (strain ATCC BAA-918 / JCM 12380 / KOD1) (Pyrococcus kodakaraensis (strain KOD1))).